An 87-amino-acid chain; its full sequence is Small ribosomal subunit protein bS20 (87 aa).

Over residues 1–11 (MANIKSAKKRA) the composition is skewed to basic residues. A disordered region spans residues 1 to 27 (MANIKSAKKRAVQSEKRRQHNASQRSM).

This sequence belongs to the bacterial ribosomal protein bS20 family.

In terms of biological role, binds directly to 16S ribosomal RNA. This Histophilus somni (strain 129Pt) (Haemophilus somnus) protein is Small ribosomal subunit protein bS20.